The chain runs to 51 residues: Insulin (51 aa).

3 disulfides stabilise this stretch: Cys-7/Cys-37, Cys-19/Cys-50, and Cys-36/Cys-41.

Belongs to the insulin family. Heterodimer of a B chain and an A chain linked by two disulfide bonds.

It is found in the secreted. In terms of biological role, insulin decreases blood glucose concentration. It increases cell permeability to monosaccharides, amino acids and fatty acids. It accelerates glycolysis, the pentose phosphate cycle, and glycogen synthesis in liver. In Anser anser anser (Western greylag goose), this protein is Insulin (INS).